Reading from the N-terminus, the 262-residue chain is 3-deoxy-manno-octulosonate cytidylyltransferase (262 aa).

Belongs to the KdsB family.

It localises to the cytoplasm. The catalysed reaction is 3-deoxy-alpha-D-manno-oct-2-ulosonate + CTP = CMP-3-deoxy-beta-D-manno-octulosonate + diphosphate. The protein operates within nucleotide-sugar biosynthesis; CMP-3-deoxy-D-manno-octulosonate biosynthesis; CMP-3-deoxy-D-manno-octulosonate from 3-deoxy-D-manno-octulosonate and CTP: step 1/1. It participates in bacterial outer membrane biogenesis; lipopolysaccharide biosynthesis. Functionally, activates KDO (a required 8-carbon sugar) for incorporation into bacterial lipopolysaccharide in Gram-negative bacteria. This is 3-deoxy-manno-octulosonate cytidylyltransferase from Acidovorax sp. (strain JS42).